The sequence spans 180 residues: Dual-action ribosomal maturation protein DarP (180 aa).

A compositionally biased stretch (basic and acidic residues) spans 1-13 (MKPDKTENTEHGI). A disordered region spans residues 1 to 21 (MKPDKTENTEHGIEPVSKTKR).

This sequence belongs to the DarP family.

The protein resides in the cytoplasm. In terms of biological role, member of a network of 50S ribosomal subunit biogenesis factors which assembles along the 30S-50S interface, preventing incorrect 23S rRNA structures from forming. Promotes peptidyl transferase center (PTC) maturation. The chain is Dual-action ribosomal maturation protein DarP from Methylobacillus flagellatus (strain ATCC 51484 / DSM 6875 / VKM B-1610 / KT).